Reading from the N-terminus, the 549-residue chain is MSRVIRAPRGTTLHCKNWQIEAPYRTLMNNLDPEVAEDPANLIVYGGAGKAARNWEAFDKIIESLENLEEDETLLIQSGKPVGIFKTHTMAPRVLISNAMLVPAWANWENFWDLEAKGLTMYGQMTAGSWIYIGTQGIIEGTFETFAALAKKHFDGTLKGKFVLTAGLGGMSGAQPLAVTMLDGACLVVEVDRNRIQRRLDTKYLDVMTDNLDEALEMVLKAKEEGKPLSVGLVGNAADVHPELVRRGIIPDVVTDQTSAHDPLNGYVPNGMTLEEAFALRKSNPEEYIKRAKKAMAEHVSAMLEMQKRGAIAFDYGNNIRRMAYDEGVKEAFNIQGYVPEYIRDLFSEGKGPFRWIALSGDPEDIYKTDEKVLELFPEDKLLERWIRLAREKIKFQGLPARICWLGYGQRAEFGLAINEMVRKGELKAPIVIGRDHHDTGSVASPYRETEAMKDGSDAIADWPILNALLNTASGATWVSVHHGGGVGIGYSIHAGVVVCADGTKESDLRIERVLTSDPGSGVMRHADAGYEIAIRTAKEKGIKMPMLK.

NAD(+) is bound by residues 46 to 47 (GG), Gln-124, Glu-190, Arg-195, 236 to 237 (NA), 257 to 261 (QTSAH), 267 to 268 (YV), and Tyr-316. The active site involves Cys-404. Residue Gly-486 participates in NAD(+) binding.

This sequence belongs to the urocanase family. NAD(+) is required as a cofactor.

Its subcellular location is the cytoplasm. It catalyses the reaction 4-imidazolone-5-propanoate = trans-urocanate + H2O. Its pathway is amino-acid degradation; L-histidine degradation into L-glutamate; N-formimidoyl-L-glutamate from L-histidine: step 2/3. Catalyzes the conversion of urocanate to 4-imidazolone-5-propionate. The chain is Urocanate hydratase from Thermoanaerobacter pseudethanolicus (strain ATCC 33223 / 39E) (Clostridium thermohydrosulfuricum).